We begin with the raw amino-acid sequence, 507 residues long: Cytochrome P450 7B1 (507 aa).

3 helical membrane passes run 14–34 (PLALLGLLFAATLLLSALFLL), 178–198 (IFAFCGSLVFEITFATLYGKI), and 287–307 (FLWASLANTIPAMFWAMYYIL). Cys-447 is a binding site for heme.

It belongs to the cytochrome P450 family. Heme is required as a cofactor. In terms of tissue distribution, highly expressed in brain structures including the corpus callosum, the anterior commissure and fornix. The hippocampal expression is particularly prominent in the dentate gyrus. Expressed in liver and kidney. The hepatic expression is sexually dimorphic, predominantly detected in male liver while barely detectable in females. Expressed in lymph nodes and spleens, in both lymphoid and stromal compartments. Higher expression is detected in fibroblastic reticular cells, a type of stromal cells in the lymph nodes. Also expressed at high levels in the outer follicle and at the B cell-T cell boundary of splenic germinal centers. Expressed in dendritic cells (DCs) subpopulations being most abundant in CD8-positive DCs.

The protein resides in the endoplasmic reticulum membrane. It localises to the microsome membrane. It catalyses the reaction 25-hydroxycholesterol + reduced [NADPH--hemoprotein reductase] + O2 = 7alpha,25-dihydroxycholesterol + oxidized [NADPH--hemoprotein reductase] + H2O + H(+). The enzyme catalyses (25R)-cholest-5-ene-3beta,26-diol + reduced [NADPH--hemoprotein reductase] + O2 = (25R)-cholest-5-en-3beta,7alpha,26-triol + oxidized [NADPH--hemoprotein reductase] + H2O + H(+). The catalysed reaction is (24S)-hydroxycholesterol + reduced [NADPH--hemoprotein reductase] + O2 = (24S)-7alpha-dihydroxycholesterol + oxidized [NADPH--hemoprotein reductase] + H2O + H(+). It carries out the reaction (24S)-25-epoxycholesterol + reduced [NADPH--hemoprotein reductase] + O2 = (24S,25)-epoxy-7alpha-hydroxycholesterol + oxidized [NADPH--hemoprotein reductase] + H2O + H(+). It catalyses the reaction (22R)-hydroxycholesterol + reduced [NADPH--hemoprotein reductase] + O2 = (22R,7alpha)-dihydroxycholesterol + oxidized [NADPH--hemoprotein reductase] + H2O + H(+). The enzyme catalyses androst-5-en-3beta,17beta-diol + reduced [NADPH--hemoprotein reductase] + O2 = androst-5-en-3beta,7alpha,17beta-triol + oxidized [NADPH--hemoprotein reductase] + H2O + H(+). The catalysed reaction is 5alpha-androstane-3beta,17beta-diol + reduced [NADPH--hemoprotein reductase] + O2 = 5alpha-androstane-3beta,6alpha,17beta-triol + oxidized [NADPH--hemoprotein reductase] + H2O + H(+). It carries out the reaction 3beta-hydroxyandrost-5-en-17-one + reduced [NADPH--hemoprotein reductase] + O2 = 3beta,7alpha-dihydroxyandrost-5-en-17-one + oxidized [NADPH--hemoprotein reductase] + H2O + H(+). It catalyses the reaction 3beta-hydroxy-5alpha-androstan-17-one + reduced [NADPH--hemoprotein reductase] + O2 = 3beta,7alpha-dihydroxy-5alpha-androstan-17-one + oxidized [NADPH--hemoprotein reductase] + H2O + H(+). The enzyme catalyses pregnenolone + reduced [NADPH--hemoprotein reductase] + O2 = 7alpha-hydroxypregnenolone + oxidized [NADPH--hemoprotein reductase] + H2O + H(+). It participates in lipid metabolism; bile acid biosynthesis. Its pathway is steroid hormone biosynthesis. With respect to regulation, inhibited by drugs voriconazole and metyrapone. A cytochrome P450 monooxygenase involved in the metabolism of endogenous oxysterols and steroid hormones, including neurosteroids. Mechanistically, uses molecular oxygen inserting one oxygen atom into a substrate, and reducing the second into a water molecule, with two electrons provided by NADPH via cytochrome P450 reductase (CPR; NADPH-ferrihemoprotein reductase). Catalyzes the hydroxylation of carbon hydrogen bonds of steroids with a preference for 7-alpha position. Usually metabolizes steroids carrying a hydroxy group at position 3, functioning as a 3-hydroxy steroid 7-alpha hydroxylase. Hydroxylates oxysterols, including 25-hydroxycholesterol and (25R)-cholest-5-ene-3beta,26-diol toward 7-alpha hydroxy derivatives, which may be transported to the liver and converted to bile acids. Via its product 7-alpha,25-dihydroxycholesterol, a ligand for the chemotactic G protein-coupled receptor GPR183/EBI2, regulates B cell migration in germinal centers of lymphoid organs, thus guiding efficient maturation of plasma B cells and overall antigen-specific humoral immune response. 7-alpha hydroxylates neurosteroids, including 3beta-hydroxyandrost-5-en-17-one (dehydroepiandrosterone) and pregnenolone, both involved in hippocampus-associated memory and learning. Metabolizes androstanoids toward 6- or 7-alpha hydroxy derivatives. This Mus musculus (Mouse) protein is Cytochrome P450 7B1.